The chain runs to 362 residues: Glutamate 5-kinase (362 aa).

Residue Lys-3 participates in ATP binding. Substrate-binding residues include Ser-43, Asp-128, and Asn-140. ATP contacts are provided by residues 160-161 and 202-208; these read TD and TGGMRTK. Residues 267-348 form the PUA domain; the sequence is AGAILIDDGA…REIENVLGYS (82 aa).

It belongs to the glutamate 5-kinase family.

The protein localises to the cytoplasm. It carries out the reaction L-glutamate + ATP = L-glutamyl 5-phosphate + ADP. The protein operates within amino-acid biosynthesis; L-proline biosynthesis; L-glutamate 5-semialdehyde from L-glutamate: step 1/2. Functionally, catalyzes the transfer of a phosphate group to glutamate to form L-glutamate 5-phosphate. This chain is Glutamate 5-kinase, found in Xanthomonas euvesicatoria pv. vesicatoria (strain 85-10) (Xanthomonas campestris pv. vesicatoria).